A 3381-amino-acid polypeptide reads, in one-letter code: Versican core protein (3381 aa).

The N-terminal stretch at 1–20 (MLINIKSILWMCSTLIAAHA) is a signal peptide. The Ig-like V-type domain maps to 21–147 (LQKVNMEKSP…EDTQDTVSLT (127 aa)). Intrachain disulfides connect cysteine 44–cysteine 131, cysteine 173–cysteine 244, cysteine 197–cysteine 218, cysteine 271–cysteine 346, and cysteine 295–cysteine 316. Residue asparagine 57 is glycosylated (N-linked (GlcNAc...) asparagine). Link domains are found at residues 151–246 (VVFH…YCYV) and 252–348 (DVFH…YCFK). 2 N-linked (GlcNAc...) asparagine glycosylation sites follow: asparagine 331 and asparagine 352. Residues 349 to 1336 (PKQNISEATT…IIEVRENKTG (988 aa)) are GAG-alpha (glucosaminoglycan attachment domain). A compositionally biased stretch (polar residues) spans 417-427 (PLTSTHRSATE). 2 disordered regions span residues 417 to 437 (PLTS…SMKK) and 603 to 623 (ESVS…MDHR). O-linked (Xyl...) (chondroitin sulfate) serine glycosylation is present at serine 660. The tract at residues 816-866 (DNTTSKPLGSTEHVGSPKLPPALITTTGVSGKDKEMPSLTEDGRDEFTRIP) is disordered. N-linked (GlcNAc...) asparagine glycosylation is present at asparagine 817. A compositionally biased stretch (basic and acidic residues) spans 846-863 (GKDKEMPSLTEDGRDEFT). Asparagine 965 and asparagine 1017 each carry an N-linked (GlcNAc...) asparagine glycan. A compositionally biased stretch (basic and acidic residues) spans 1043 to 1052 (EDFLWKEQTP). Disordered stretches follow at residues 1043–1081 (EDFL…SDGS) and 1218–1244 (FSSA…PDEE). Asparagine 1333 is a glycosylation site (N-linked (GlcNAc...) asparagine). Residues 1337–3074 (RMSDFSVSGH…VEGTAVYLPG (1738 aa)) form a GAG-beta region. A disordered region spans residues 1338 to 1362 (MSDFSVSGHPIDSESKEDEPCSEET). The segment covering 1352 to 1362 (SKEDEPCSEET) has biased composition (acidic residues). Residue asparagine 1393 is glycosylated (N-linked (GlcNAc...) asparagine). Residues 1417 to 1428 (KDPEAAEARRGQ) are compositionally biased toward basic and acidic residues. Disordered regions lie at residues 1417–1446 (KDPE…ESDS), 1455–1474 (GLPT…SLEI), and 1484–1512 (TAEP…GPDS). N-linked (GlcNAc...) asparagine glycans are attached at residues asparagine 1437 and asparagine 1463. O-linked (Xyl...) (chondroitin sulfate) serine glycans are attached at residues serine 1539 and serine 1621. N-linked (GlcNAc...) asparagine glycosylation occurs at asparagine 1653. The interval 1708-1785 (PPLEETTRKE…ERETTSSTVV (78 aa)) is disordered. The span at 1712–1721 (ETTRKEEEKG) shows a compositional bias: basic and acidic residues. A compositionally biased stretch (polar residues) spans 1726 to 1738 (ASTVEVHSPTQRL). Positions 1743–1761 (SPSELESSSETPPDDSAAA) are enriched in low complexity. The segment covering 1764–1784 (KSFTSQMTPTQSERETTSSTV) has biased composition (polar residues). O-linked (Xyl...) (chondroitin sulfate) serine glycosylation is found at serine 1928 and serine 1952. The span at 1964–1976 (PSVTPTSDLSNHT) shows a compositional bias: polar residues. Disordered regions lie at residues 1964-1986 (PSVT…GSTL) and 2041-2126 (EGAI…QSSV). N-linked (GlcNAc...) asparagine glycosylation is found at asparagine 1974, asparagine 2045, asparagine 2074, and asparagine 2103. Over residues 2065–2075 (STEEGEVKENH) the composition is skewed to basic and acidic residues. Position 2109 is a phosphoserine (serine 2109). Serine 2240 and serine 2247 each carry an O-linked (Xyl...) (chondroitin sulfate) serine glycan. N-linked (GlcNAc...) asparagine glycosylation is found at asparagine 2263, asparagine 2290, and asparagine 2356. Disordered stretches follow at residues 2338–2388 (EGPF…AETK), 2490–2512 (EQRE…EKAT), and 2594–2615 (TDLD…TQVQ). 2 stretches are compositionally biased toward polar residues: residues 2345–2357 (LTFS…PQNQ) and 2367–2383 (TSRP…ENSV). Serine 2607 and serine 2608 each carry phosphoserine. Phosphothreonine is present on threonine 2612. Residues asparagine 2623 and asparagine 2641 are each glycosylated (N-linked (GlcNAc...) asparagine). Serine 2714, serine 2715, and serine 2759 each carry an O-linked (Xyl...) (chondroitin sulfate) serine glycan. The segment at 2819-2893 (PPLSIHLGSG…EPSEDESKPK (75 aa)) is disordered. Positions 2840–2851 (ALPSTDASTPPV) are enriched in polar residues. 2 N-linked (GlcNAc...) asparagine glycosylation sites follow: asparagine 2919 and asparagine 3052. Residues 3074–3110 (GPDRCKMNPCLNGGTCYPTETSYVCTCVPGYSGDRCE) form the EGF-like 1 domain. 11 disulfide bridges follow: cysteine 3078-cysteine 3089, cysteine 3083-cysteine 3098, cysteine 3100-cysteine 3109, cysteine 3116-cysteine 3127, cysteine 3121-cysteine 3136, cysteine 3138-cysteine 3147, cysteine 3154-cysteine 3165, cysteine 3182-cysteine 3274, cysteine 3250-cysteine 3266, cysteine 3281-cysteine 3324, and cysteine 3310-cysteine 3337. In terms of domain architecture, EGF-like 2; calcium-binding spans 3112–3148 (DFDECHSNPCRNGATCIDGFNTFRCLCLPSYVGALCE). The 115-residue stretch at 3161–3275 (FQGQCYKYFA…CNYHLTYTCK (115 aa)) folds into the C-type lectin domain. The 61-residue stretch at 3279–3339 (VACGQPPVVE…WAMPKITCLN (61 aa)) folds into the Sushi domain. Asparagine 3354 and asparagine 3364 each carry an N-linked (GlcNAc...) asparagine glycan. The segment covering 3355-3365 (SSSAKDNSINT) has biased composition (polar residues). The interval 3355 to 3381 (SSSAKDNSINTSKHDHRWSRRWQESRR) is disordered.

Belongs to the aggrecan/versican proteoglycan family. In terms of assembly, interacts with FBLN1. Post-translationally, phosphorylated by FAM20C in the extracellular medium. Proteolytically cleaved by ADAMTS5 and ADAMTS15 in the pericellular matrix surrounding myoblasts, facilitating myoblast contact and fusion which is required for skeletal muscle development and regeneration. As to expression, cerebral white matter. Isoform V0 and isoform V1 are expressed in the central nervous system, and in a number of mesenchymal and epithelial tissues; the major isoform V2 is restricted to the central nervous system.

Its subcellular location is the secreted. It is found in the extracellular space. The protein localises to the extracellular matrix. It localises to the cell projection. The protein resides in the cilium. Its subcellular location is the photoreceptor outer segment. It is found in the interphotoreceptor matrix. May play a role in intercellular signaling and in connecting cells with the extracellular matrix. May take part in the regulation of cell motility, growth and differentiation. Binds hyaluronic acid. This chain is Versican core protein (VCAN), found in Bos taurus (Bovine).